A 656-amino-acid chain; its full sequence is DNA mismatch repair protein MutL (656 aa).

This sequence belongs to the DNA mismatch repair MutL/HexB family.

This protein is involved in the repair of mismatches in DNA. It is required for dam-dependent methyl-directed DNA mismatch repair. May act as a 'molecular matchmaker', a protein that promotes the formation of a stable complex between two or more DNA-binding proteins in an ATP-dependent manner without itself being part of a final effector complex. The sequence is that of DNA mismatch repair protein MutL from Lactococcus lactis subsp. lactis (strain IL1403) (Streptococcus lactis).